A 608-amino-acid polypeptide reads, in one-letter code: Glutamine--fructose-6-phosphate aminotransferase [isomerizing] (608 aa).

The active-site Nucleophile; for GATase activity is the cysteine 2. A Glutamine amidotransferase type-2 domain is found at 2–217; sequence CGIVGIVGNQ…DGDWAVIGKT (216 aa). 2 SIS domains span residues 281–422 and 456–598; these read ISDA…ARGT and LSRE…VDQP. Lysine 603 serves as the catalytic For Fru-6P isomerization activity.

In terms of assembly, homodimer.

It localises to the cytoplasm. The catalysed reaction is D-fructose 6-phosphate + L-glutamine = D-glucosamine 6-phosphate + L-glutamate. Functionally, catalyzes the first step in hexosamine metabolism, converting fructose-6P into glucosamine-6P using glutamine as a nitrogen source. This chain is Glutamine--fructose-6-phosphate aminotransferase [isomerizing], found in Rhizobium meliloti (strain 1021) (Ensifer meliloti).